A 336-amino-acid chain; its full sequence is Abasic site processing protein HMCES (336 aa).

The active-site Nucleophile is the Cys-2. The residue at position 2 (Cys-2) is a Thiazolidine linkage to a ring-opened DNA abasic site. The disordered stretch occupies residues Arg-26 to Asn-51. A compositionally biased stretch (polar residues) spans Tyr-40–Asn-51. Residue Glu-129 is part of the active site. Residues Gln-285–Lys-336 are disordered. The span at Leu-322–Lys-336 shows a compositional bias: basic and acidic residues.

Belongs to the SOS response-associated peptidase family. Post-translationally, ubiquitination of the hmces DNA-protein cross-link by rfwd3 may promotes its degradation.

It is found in the chromosome. Its activity is regulated as follows. Formation and reversal of DNA-protein cross-link depends on DNA context. Catalyzes formation of the thiazolidine linkage in presence of abasic sites in single-stranded DNA. Mediates the reversal of the thiazolidine cross-link in presence of double stranded DNA. Its function is as follows. Sensor of abasic sites in single-stranded DNA (ssDNA) required to preserve genome integrity by promoting error-free repair of abasic sites. Acts as an enzyme that recognizes and binds abasic sites in ssDNA at replication forks and chemically modifies the lesion by forming a covalent cross-link with DNA: forms a stable thiazolidine linkage between a ring-opened abasic site and the alpha-amino and sulfhydryl substituents of its N-terminal catalytic cysteine residue. The hmces DNA-protein cross-link is then either reversed or degraded. Hmces is able to catalyze the reversal of its thiazolidine cross-link and cycle between a cross-link and a non-cross-linked state depending on DNA context: mediates self-reversal of the thiazolidine cross-link in double stranded DNA, allowing apex1 to initiate downstream repair of abasic sites. The hmces DNA-protein cross-link can also be degraded by the sprtn metalloprotease following unfolding by the brip1/fancj helicase. Promotes error-free repair of abasic sites by protecting abasic sites from translesion synthesis (TLS) polymerases and endonucleases that are error-prone and would generate mutations and double-strand breaks. Acts as a protease: mediates autocatalytic processing of its N-terminal methionine in order to expose the catalytic cysteine. The HMCES DNA-protein cross-link is then either reversed or degraded. According to a model, the HMCES DNA-protein cross-link. The chain is Abasic site processing protein HMCES from Xenopus laevis (African clawed frog).